A 303-amino-acid polypeptide reads, in one-letter code: MEKVIQELKEREVGKVLANEPLANHTTMKIGGPADVLVIPSSVDAVKDIMDVIKKYDVKWTVIGRGSNLLVLDEGIRGVVIKLGAGLDHLELEGEQVTVGGGYSVVRLATSLSKKGLSGLEFAAGIPGSVGGAVYMNAGAHGSDMSEILVKAHILFEDGTIEWLTNEQMDFSYRTSVLQKKRPGVCLEAVLQLEQKDKESIVQQMQSNKDYRKNTQPYSSPCAGSIFRNPLPNHAGNLVEKAGLKGYQIGGAKISEMHGNFIVNAGGASAKDVLDLIDHVKKTIREKYEIDMHTEVEIIGGNR.

An FAD-binding PCMH-type domain is found at 29-196 (KIGGPADVLV…LEAVLQLEQK (168 aa)). Arginine 174 is an active-site residue. The active-site Proton donor is serine 225. Residue glutamate 295 is part of the active site.

This sequence belongs to the MurB family. FAD is required as a cofactor.

The protein resides in the cytoplasm. The catalysed reaction is UDP-N-acetyl-alpha-D-muramate + NADP(+) = UDP-N-acetyl-3-O-(1-carboxyvinyl)-alpha-D-glucosamine + NADPH + H(+). The protein operates within cell wall biogenesis; peptidoglycan biosynthesis. Cell wall formation. This Bacillus subtilis (strain 168) protein is UDP-N-acetylenolpyruvoylglucosamine reductase (murB).